Consider the following 271-residue polypeptide: Homeobox protein pal-1 (271 aa).

3 disordered regions span residues 1–25 (MSVD…TNVN), 100–135 (PPLS…ASSS), and 178–202 (GSAG…TNNV). Low complexity-rich tracts occupy residues 100-117 (PPLS…YPSP) and 125-135 (STSSGIGASSS). Positions 189 to 202 (DTKSLPTGPGTNNV) are enriched in polar residues. The segment at residues 207-266 (ADKYRMVYSDYQRLELEKEFHTSAFITSDRKSQLSTMLSLTERQIKIWFQNRRAKDRRDK) is a DNA-binding region (homeobox).

This sequence belongs to the Caudal homeobox family. Interacts with tir-1 and let-756.

Its subcellular location is the nucleus. It is found in the chromosome. The protein localises to the centromere. It localises to the kinetochore. Functionally, transcriptional activator. Interacts with promoter regions for tbx-8.9, tbx-9, elt-1, hnd-1, scrt-1, and vab-7 genes. Binds the sequence ATTTATGAC. Binds to the enhancer region of the hlh-1 gene promoter during embryonic body wall muscle development. Activates the gene for mab-5 in embryo development. Necessary for vab-7 expression in C blastomeres in the posterior of embryos. Required for posterior V6 neuroectoblast cell fate specification during postembryonic neurogenesis (patterning) which generates the characteristic ray lineage during male tail development. Binds to ced-3 promoter and activated expression which is crucial for tail-spike cell death. Has a role in E cell specification in endoderm development and body wall muscle development. The polypeptide is Homeobox protein pal-1 (Caenorhabditis briggsae).